Here is a 111-residue protein sequence, read N- to C-terminus: Cell division protein FtsB (111 aa).

Topologically, residues 1–3 (MRL) are cytoplasmic. Residues 4–21 (LFLVLLVLLGLIQYPLWL) traverse the membrane as a helical segment. The Periplasmic segment spans residues 22–111 (GKGGWFKVWD…PGQTASAPRR (90 aa)). Residues 31 to 62 (DLQRQVAAQHETNDGLRARNAALEAEVRDLAT) adopt a coiled-coil conformation. The segment at 88–111 (VPPGTPVPQPAPGAPGQTASAPRR) is disordered. Over residues 90–100 (PGTPVPQPAPG) the composition is skewed to pro residues. Over residues 101-111 (APGQTASAPRR) the composition is skewed to low complexity.

This sequence belongs to the FtsB family. Part of a complex composed of FtsB, FtsL and FtsQ.

Its subcellular location is the cell inner membrane. In terms of biological role, essential cell division protein. May link together the upstream cell division proteins, which are predominantly cytoplasmic, with the downstream cell division proteins, which are predominantly periplasmic. The chain is Cell division protein FtsB from Bordetella petrii (strain ATCC BAA-461 / DSM 12804 / CCUG 43448).